A 276-amino-acid chain; its full sequence is Tyrosinase (276 aa).

Cu cation-binding residues include H38, H56, H66, H193, H197, and H219.

Belongs to the tyrosinase family. It depends on Cu(2+) as a cofactor.

The catalysed reaction is 2 L-dopa + O2 = 2 L-dopaquinone + 2 H2O. It catalyses the reaction L-tyrosine + O2 = L-dopaquinone + H2O. Functionally, this is a copper-containing oxidase that functions in the formation of pigments such as melanins and other polyphenolic compounds. The chain is Tyrosinase (melC2) from Streptomyces galbus.